Reading from the N-terminus, the 808-residue chain is Spindle assembly abnormal protein 4 (808 aa).

A disordered region spans residues methionine 1–serine 151. Positions proline 42 to serine 54 are enriched in low complexity. Composition is skewed to polar residues over residues serine 61–serine 78 and proline 85–asparagine 104. Residues alanine 113–alanine 123 show a composition bias toward basic and acidic residues. Residues glutamate 124–glutamate 133 show a composition bias toward acidic residues. Positions lysine 161–serine 181 form a coiled coil. 2 disordered regions span residues threonine 187 to arginine 206 and valine 271 to arginine 298. The segment covering methionine 280–glutamine 294 has biased composition (polar residues). Residues leucine 314–phenylalanine 503 are a coiled coil. The span at lysine 511 to threonine 529 shows a compositional bias: polar residues. Positions lysine 511–asparagine 564 are disordered. Positions serine 530–serine 541 are enriched in low complexity. Positions leucine 542–serine 551 are enriched in polar residues.

Interacts with hyls-1; leading to hyls-1 localization into newly forming centrioles.

It localises to the cytoplasm. The protein resides in the cytoskeleton. It is found in the microtubule organizing center. Its subcellular location is the centrosome. Required for centrosome duplication. Plays a central role in determining centrosome size. In Caenorhabditis elegans, this protein is Spindle assembly abnormal protein 4 (sas-4).